Consider the following 549-residue polypeptide: Adhesion G protein-coupled receptor G3 (549 aa).

The N-terminal stretch at 1 to 20 is a signal peptide; sequence MATPRGLGALLLLLLLPTSG. The Extracellular portion of the chain corresponds to 21-270; it reads QEKPTEGPRN…DQSTVHILTR (250 aa). Residues asparagine 98, asparagine 144, and asparagine 210 are each glycosylated (N-linked (GlcNAc...) asparagine). In terms of domain architecture, GAIN-B spans 107–262; the sequence is FYFSLEPSQV…ALLLRPTLDQ (156 aa). Cystine bridges form between cysteine 215/cysteine 244 and cysteine 233/cysteine 246. Residues 215–262 are GPS; that stretch reads CVFWDVTKGTTGDWSSEGCSTEVRPEGTVCCCDHLTFFALLLRPTLDQ. The tract at residues 251 to 259 is stachel; sequence FFALLLRPT. Residues 271-295 form a helical membrane-spanning segment; that stretch reads ISQAGCGVSMIFLAFTIILYAFLRL. Topologically, residues 296-304 are cytoplasmic; that stretch reads SRERFKSED. Residues 305–326 traverse the membrane as a helical segment; that stretch reads APKIHVALGGSLFLLNLAFLVN. At 327 to 338 the chain is on the extracellular side; sequence VGSGSKGSDAAC. Cysteine 338 and cysteine 420 form a disulfide bridge. A helical transmembrane segment spans residues 339–364; that stretch reads WARGAVFHYFLLCAFTWMGLEAFHLY. Residues 365–378 are Cytoplasmic-facing; it reads LLAVRVFNTYFGHY. Residues 379–400 form a helical membrane-spanning segment; the sequence is FLKLSLVGWGLPALMVIGTGSA. Over 401-428 the chain is Extracellular; that stretch reads NSYGLYTIRDRENRTSLELCWFREGTTM. Asparagine 413 carries N-linked (GlcNAc...) asparagine glycosylation. The chain crosses the membrane as a helical span at residues 429 to 454; it reads YALYITVHGYFLITFLFGMVVLALVV. Residues 455–474 are Cytoplasmic-facing; that stretch reads WKIFTLSRATAVKERGKNRK. Residues 475–495 form a helical membrane-spanning segment; sequence KVLTLLGLSSLVGVTWGLAIF. Residues 496–501 are Extracellular-facing; sequence TPLGLS. A helical transmembrane segment spans residues 502–525; the sequence is TVYIFALFNSLQGVFICCWFTILY. Asparagine 510 contributes to the cortisol binding site. Over 526–549 the chain is Cytoplasmic; that stretch reads LPSQSTTVSSSTARLDQAHSASQE.

It belongs to the G-protein coupled receptor 2 family. Adhesion G-protein coupled receptor (ADGR) subfamily. Heterodimer of 2 chains generated by proteolytic processing; the large extracellular N-terminal fragment and the membrane-bound C-terminal fragment predominantly remain associated and non-covalently linked. Interacts with PRTN3; this interaction induces the activation of PAR2. Interacts with GNAO1 (when palmitoylated). Post-translationally, autoproteolytically processed at the GPS region of the GAIN-B domain; this cleavage modulates receptor activity. O- and N-glycosylated. In terms of tissue distribution, expressed in cultured primary dermal lymphatic endothelial cells. Highly expressed in polymorphonuclear cells (PMNs) including neutrophilic, eosinophilic, and basophilic granulocytes.

Its subcellular location is the cell membrane. Its activity is regulated as follows. Forms a heterodimer of 2 chains generated by proteolytic processing that remain associated through non-covalent interactions mediated by the GAIN-B domain. In the inactivated receptor, the Stachel sequence (also named stalk) is embedded in the GAIN-B domain, where it adopts a beta-strand conformation. On activation, the Stachel moves into the 7 transmembrane region and adopts a twisted hook-shaped configuration that forms contacts within the receptor, leading to coupling of a G-alpha protein, which activates signaling. The cleaved GAIN-B and N-terminal domains can then dissociate from the rest of the receptor. In terms of biological role, adhesion G-protein coupled receptor (aGPCR) for glucocorticoid hormones such as cortisol, cortisone and 11-deoxycortisol. Ligand binding causes a conformation change that triggers signaling via guanine nucleotide-binding proteins (G proteins) and modulates the activity of downstream effectors, such as adenylate cyclase. ADGRG3/GPR97 is coupled to G(o)/GNAO1 G proteins and mediates signaling by inhibiting adenylate cyclase activity. May also signal through G-alpha(q)-proteins; additional evidence are however required to confirm this result in vivo. Plays a role in the regulation of various processes including B-cell development, inflammation or innate immunity. Regulates migration of lymphatic endothelial cells in vitro via the small GTPases RhoA and CDC42. Antibody ligation leads to the production and activation of antimicrobial mediators like reactive oxygen species (ROS) and myeloperoxidase (MPO) as well as enhanced bacteria uptake and killing by granulocytes. Additionally, collaborates with protease-activated receptor 2/PAR2 to stimulate neutrophil-driven antimicrobial responses and endothelial cell activation. This Homo sapiens (Human) protein is Adhesion G protein-coupled receptor G3.